The sequence spans 160 residues: Sulfur-rich protein (160 aa).

Helical transmembrane passes span 63–83 (ITMV…TFVL) and 92–112 (FLFL…SVCM).

The protein resides in the membrane. The chain is Sulfur-rich protein (srp) from Chlamydophila psittaci (strain ATCC VR-125 / 6BC) (Chlamydia psittaci).